Consider the following 490-residue polypeptide: Nuclear distribution protein PAC1 (490 aa).

The stretch at 65–96 (STVLRLQKKIIDLENEIHNLTNIINTTNSETN) forms a coiled coil. 8 WD repeats span residues 118–157 (QCEN…NTIP), 163–204 (AHTR…RTLN), 205–245 (GHEH…CLKS), 251–290 (EWCR…GVAM), 293–327 (GHTH…FPSI), 328–367 (PSEL…LIPH), 388–427 (GHSS…ETGS), and 436–487 (GHEG…NSIK).

The protein belongs to the WD repeat LIS1/nudF family. Self-associates. Interacts with NDL1 and dynein.

It is found in the cytoplasm. Its subcellular location is the cytoskeleton. The protein localises to the spindle pole. Its function is as follows. Positively regulates the activity of the minus-end directed microtubule motor protein dynein. Plays a central role in positioning the mitotic spindle at the bud neck during cell division. Targets cytoplasmic dynein to microtubule plus ends, thereby promoting dynein-mediated microtubule sliding along the bud cortex and consequently the movement of the mitotic spindle to the bud neck. This Candida tropicalis (strain ATCC MYA-3404 / T1) (Yeast) protein is Nuclear distribution protein PAC1.